The sequence spans 459 residues: Mycothione reductase (459 aa).

FAD is bound at residue 31–39 (EQGTFGGTC). Cys39 and Cys44 form a disulfide bridge. His444 (proton acceptor) is an active-site residue.

Belongs to the class-I pyridine nucleotide-disulfide oxidoreductase family. As to quaternary structure, homodimer. The cofactor is FAD.

It carries out the reaction 2 mycothiol + NADP(+) = mycothione + NADPH + H(+). The enzyme catalyses 2 mycothiol + NAD(+) = mycothione + NADH + H(+). Its function is as follows. Catalyzes the NAD(P)H-dependent reduction of mycothione (the oxidized disulfide form of mycothiol) to mycothiol. The chain is Mycothione reductase (mtr) from Mycobacterium tuberculosis (strain CDC 1551 / Oshkosh).